Consider the following 311-residue polypeptide: Iron-binding protein YfeA (311 aa).

The first 31 residues, Met1–Ala31, serve as a signal peptide directing secretion. Residues His76, His141, Glu207, and Asp282 each contribute to the Fe(2+) site.

The protein belongs to the bacterial solute-binding protein 9 family. Monomer.

Its subcellular location is the periplasm. In terms of biological role, part of the ATP-binding cassette (ABC) transport system YfeABC involved in iron import. Binds iron with high affinity and specificity and delivers it to the membrane permease for translocation into the cytoplasm. Also binds Mn(2+) and Zn(2+). This chain is Iron-binding protein YfeA (yfeA), found in Yersinia pestis.